A 284-amino-acid chain; its full sequence is Undecaprenyl-diphosphatase (284 aa).

The next 8 helical transmembrane spans lie at 7-27 (IILG…TGHL), 44-64 (EMFD…LYFH), 90-110 (LWLK…PLND), 116-136 (FYHF…FIVI), 167-187 (VLSL…ALLI), 197-217 (FTFF…ILHF), 229-249 (FGVL…AIKF), and 259-279 (FTFF…YAAF).

This sequence belongs to the UppP family.

It localises to the cell membrane. It catalyses the reaction di-trans,octa-cis-undecaprenyl diphosphate + H2O = di-trans,octa-cis-undecaprenyl phosphate + phosphate + H(+). Its function is as follows. Catalyzes the dephosphorylation of undecaprenyl diphosphate (UPP). Confers resistance to bacitracin. In Lactococcus lactis subsp. cremoris (strain MG1363), this protein is Undecaprenyl-diphosphatase.